The primary structure comprises 150 residues: Ribonuclease H (150 aa).

An RNase H type-1 domain is found at 1-141; it reads MKFIEVHTDG…VDVLARNQAI (141 aa). Residues aspartate 9, glutamate 47, aspartate 69, and aspartate 133 each coordinate Mg(2+).

This sequence belongs to the RNase H family. Monomer. The cofactor is Mg(2+).

Its subcellular location is the cytoplasm. The catalysed reaction is Endonucleolytic cleavage to 5'-phosphomonoester.. Endonuclease that specifically degrades the RNA of RNA-DNA hybrids. The protein is Ribonuclease H of Xanthomonas euvesicatoria pv. vesicatoria (strain 85-10) (Xanthomonas campestris pv. vesicatoria).